The following is a 292-amino-acid chain: Oxidative stress-responsive serine-rich protein 1 (292 aa).

The segment at 24–178 (ASGSVASLSV…ATQVPQASLK (155 aa)) is disordered. The span at 65 to 83 (STRKSSRGAVRTQRRRRSK) shows a compositional bias: basic residues. Thr-143 and Thr-233 each carry phosphothreonine.

This chain is Oxidative stress-responsive serine-rich protein 1 (OSER1), found in Homo sapiens (Human).